We begin with the raw amino-acid sequence, 687 residues long: MGIDLNTVEEEAEEGAAAAVCGELWHACAGPGVALPRRGSALVYLPQAHLAADGGGGEVPPAGAAAVPPHVACRVVGVELRADAATDEVYARLALVAEGEMLQRNFREGGGEDGAGEMEGCDAEKKPRMPHMFCKTLTASDTSTHGGFSVPRRAAEDCFPPLDYKTVRPSQELIAVDLHGTQWKFRHIYRGQPRRHLLTIGWSSFVNRKKLVSGDAVLFLRGDDGQLRLGVRRAVQLRNEALFEPVNSSDSKLRILSSVASSLENKSVFHICFNPRSGASEFIVPYWRLLKSLNHPFSIGMRFRVCYESEDANERSAGLISGISEVDPIRWPGSRWKCLLVRWDDSTDSSHQNRVSPWEIERVGGSVSVTHSLSSGSKRTKLHFPQGSLDTPFLNGNGHPDSMGTENFHRVLQGQEFRGSRSHGVVCSESPGVPNFQSPDNRRFSADMRGYMMPASGPPQRNTEFTYQPIGFSESLGFPEVLQGQEMSQVVPLFRGATFGARTQNDRVVSANSVHRSAAQSGLLASTLGHPISQFTLSSSKVSSPSSVLMFNQATAPNHETVSGTNNKGMHVSQFASQEMLSETVTWPGTQRQTPSEITSNQFALARIPAPPSGAESGLPKRDAGRSSCRLFGFSLTGNMLGEDGEGLDDGAIEAGCENPPVLELFGHSHSTPGALHALCAAAPLGM.

Positions 133 to 235 (FCKTLTASDT…QLRLGVRRAV (103 aa)) form a DNA-binding region, TF-B3.

The protein belongs to the ARF family. As to quaternary structure, homo and heterodimers. As to expression, expressed in roots, culms, leaves and young panicles.

It is found in the nucleus. In terms of biological role, auxin response factors (ARFs) are transcriptional factors that bind specifically to the DNA sequence 5'-TGTCTC-3' found in the auxin-responsive promoter elements (AuxREs). The protein is Auxin response factor 14 (ARF14) of Oryza sativa subsp. japonica (Rice).